Consider the following 202-residue polypeptide: Imidazoleglycerol-phosphate dehydratase (202 aa).

The protein belongs to the imidazoleglycerol-phosphate dehydratase family.

The protein localises to the cytoplasm. It carries out the reaction D-erythro-1-(imidazol-4-yl)glycerol 3-phosphate = 3-(imidazol-4-yl)-2-oxopropyl phosphate + H2O. The protein operates within amino-acid biosynthesis; L-histidine biosynthesis; L-histidine from 5-phospho-alpha-D-ribose 1-diphosphate: step 6/9. This Rhizobium leguminosarum bv. trifolii (strain WSM2304) protein is Imidazoleglycerol-phosphate dehydratase.